A 349-amino-acid polypeptide reads, in one-letter code: 3'-5' exoribonuclease 1 (349 aa).

Composition is skewed to basic and acidic residues over residues methionine 1 to alanine 10 and proline 22 to proline 35. A disordered region spans residues methionine 1 to threonine 48. Phosphoserine is present on residues serine 59 and serine 62. In terms of domain architecture, SAP spans isoleucine 76–tyrosine 110. An Exonuclease domain is found at isoleucine 130–alanine 306. Positions 134 and 136 each coordinate Mg(2+). Glutamate 136 functions as the Proton acceptor in the catalytic mechanism. Residues glutamate 136 and alanine 137 each coordinate AMP. Aspartate 234 lines the Mg(2+) pocket. Residue histidine 293 is the Proton acceptor of the active site. Histidine 293 lines the AMP pocket. Aspartate 298 is a Mg(2+) binding site.

In terms of assembly, identified in a histone pre-mRNA complex, at least composed of ERI1, LSM11, SLBP, SNRPB, SYNCRIP and YBX1. Interacts in a cooperative manner with SLBP to the mature 3'-end of histone mRNAs. Binds to 40S and 60S ribosomal subunits and to 80S assembled ribosomes. Found in a ternary complex with SLBP and the stem-loop structure of the 3'-end of histone mRNAs. Mg(2+) serves as cofactor.

It is found in the cytoplasm. It localises to the nucleus. The protein resides in the nucleolus. It catalyses the reaction Exonucleolytic cleavage in the 3'- to 5'-direction to yield nucleoside 5'-phosphates.. Its activity is regulated as follows. Although it can bind simultaneously with SLBP to the 3'-end of histone mRNA, the presence of SLBP prevents the exonuclease activity. Functionally, RNA exonuclease that binds to the 3'-end of histone mRNAs and degrades them, suggesting that it plays an essential role in histone mRNA decay after replication. A 2' and 3'-hydroxyl groups at the last nucleotide of the histone 3'-end is required for efficient 3'-end histone mRNA exonuclease activity and degradation of RNA substrates. Also able to degrade the 3'-overhangs of short interfering RNAs (siRNAs) in vitro, suggesting a possible role as regulator of RNA interference (RNAi). Required for binding the 5'-ACCCA-3' sequence present in stem-loop structure. Able to bind other mRNAs. Required for 5.8S rRNA 3'-end processing. Also binds to 5.8s ribosomal RNA. Binds with high affinity to the stem-loop structure of replication-dependent histone pre-mRNAs. In vitro, does not have sequence specificity. In vitro, has weak DNA exonuclease activity. In vitro, shows biphasic kinetics such that there is rapid hydrolysis of the last three unpaired RNA nucleotides in the 39 flanking sequence followed by a much slower cleavage through the stem that occurs over a longer incubation period in the order of hours. ERI1-mediated RNA metabolism plays a key role in chondrogenesis. In Homo sapiens (Human), this protein is 3'-5' exoribonuclease 1.